The chain runs to 438 residues: Putative hydrolase MSMEG_3995/MSMEI_3903 (438 aa).

Zn(2+) contacts are provided by D95, D104, E143, and H208. K217 is covalently cross-linked (Isoglutamyl lysine isopeptide (Lys-Gln) (interchain with Q-Cter in protein Pup)). Residue H400 coordinates Zn(2+).

It belongs to the peptidase M20 family. Zn(2+) serves as cofactor.

The sequence is that of Putative hydrolase MSMEG_3995/MSMEI_3903 from Mycolicibacterium smegmatis (strain ATCC 700084 / mc(2)155) (Mycobacterium smegmatis).